The chain runs to 1894 residues: Adenylate kinase 9 (1894 aa).

An adenylate kinase 1 region spans residues 32–286 (TCFIIFGKPG…LFMTVIERLK (255 aa)). 41–46 (GAGKTT) contributes to the ATP binding site. The tract at residues 61–90 (EALSVLEEHIAAEKETGAMLQSLLVSGHSI) is NMP 1. Residue 117 to 120 (EMPS) coordinates AMP. The LID 1 stretch occupies residues 161–206 (GQRQHSTTGYVYTREQWDPEIIESRRRKKRDFPKEGKSEEEEEEEE). Positions 188-211 (KKRDFPKEGKSEEEEEEEEQEEEE) are disordered. The span at 198–211 (SEEEEEEEEQEEEE) shows a compositional bias: acidic residues. R230 lines the AMP pocket. Positions 451–478 (IKVVQQRLLNEKQAKQQEERTLKELQVQ) form a coiled coil. A disordered region spans residues 492-533 (SEELPSLENTGSKLSSLEIGQEDKSKSETTITGDQVKDVSTE). A coiled-coil region spans residues 651-691 (LERLQEEAQAKKREEEEIRKVKEEELRLEEEKQRLMELATK). 2 disordered regions span residues 710–789 (PYPD…LGSE) and 876–911 (EEEA…EKRR). Residues 715–736 (PDNEAEEEVEDSEIHEESEAQE) are compositionally biased toward acidic residues. Basic and acidic residues-rich tracts occupy residues 757–768 (EGDHEPEAEFKP) and 777–789 (ETEK…LGSE). Acidic residues predominate over residues 876–903 (EEEAEDYQAETEIDEEQEEEEEEEEEGE). The adenylate kinase 2 stretch occupies residues 976–1187 (LRICLLGPHG…VAKRRAELIL (212 aa)). 985–990 (GSGKTV) is a binding site for ATP. Residues 1005 to 1036 (QFDEFLQEKMLLKAERKFGPEFEDDSEEEQLV) form an NMP 2 region. AMP is bound by residues 1034–1036 (QLV) and 1063–1066 (VQLT). Positions 1108 to 1128 (DGFPRHPEEAQFLGERGFFPD) are LID 2. Residues 1223 to 1241 (EFPKDEEEMSEEDEEQEAD) show a composition bias toward acidic residues. Residues 1223–1243 (EFPKDEEEMSEEDEEQEADAT) are disordered. Residues 1395-1584 (VRIMIVGPPK…VWNEVLKDIQ (190 aa)) form an adenylate kinase 3 region. 1404 to 1409 (KSGKTT) provides a ligand contact to ATP. The NMP 3 stretch occupies residues 1424–1455 (SVGDALRGMLNNHPDSELSLMLNWHLHKGKTV). Residues R1430, 1482 to 1485 (GYPV), and Q1489 each bind AMP. The tract at residues 1519–1533 (LEKKTEQSMSYPLHN) is LID 3.

Belongs to the adenylate kinase family. Highly expressed in the testis.

Its subcellular location is the cytoplasm. It is found in the nucleus. The protein resides in the cell projection. It localises to the cilium. The protein localises to the flagellum. The catalysed reaction is a ribonucleoside 5'-phosphate + ATP = a ribonucleoside 5'-diphosphate + ADP. It carries out the reaction AMP + ATP = 2 ADP. The enzyme catalyses GTP + AMP = GDP + ADP. It catalyses the reaction CMP + ATP = CDP + ADP. The catalysed reaction is GTP + CMP = CDP + GDP. It carries out the reaction dAMP + ATP = dADP + ADP. The enzyme catalyses dCMP + ATP = dCDP + ADP. It catalyses the reaction a ribonucleoside 5'-diphosphate + ATP = a ribonucleoside 5'-triphosphate + ADP. The catalysed reaction is CDP + ATP = CTP + ADP. It carries out the reaction CDP + GTP = CTP + GDP. The enzyme catalyses GDP + ATP = GTP + ADP. It catalyses the reaction UDP + ATP = UTP + ADP. The catalysed reaction is GTP + UDP = UTP + GDP. It carries out the reaction dTDP + GTP = dTTP + GDP. The enzyme catalyses dCDP + ATP = dCTP + ADP. It catalyses the reaction dCDP + GTP = dCTP + GDP. The catalysed reaction is dGDP + ATP = dGTP + ADP. It carries out the reaction dTDP + ATP = dTTP + ADP. The enzyme catalyses dADP + GTP = dATP + GDP. Broad-specificity nucleoside phosphate kinase involved in cellular nucleotide homeostasis by catalyzing nucleoside-phosphate interconversions. Similar to other adenylate kinases, preferentially catalyzes the phosphorylation of the nucleoside monophosphate AMP with ATP as phosphate donor to produce ADP. In vitro, can also catalyze the phosphorylation of CMP, dAMP and dCMP and use GTP as an alternate phosphate donor. Moreover, exhibits a diphosphate kinase activity, producing ATP, CTP, GTP, UTP, TTP, dATP, dCTP and dGTP from the corresponding diphosphate substrates with either ATP or GTP as phosphate donors. For this activity shows the following substrate preference CDP &gt; UDP &gt; ADP &gt; TDP. The chain is Adenylate kinase 9 from Mus musculus (Mouse).